Reading from the N-terminus, the 359-residue chain is tRNA/tmRNA (uracil-C(5))-methyltransferase (359 aa).

S-adenosyl-L-methionine contacts are provided by Q183, Y211, N216, E232, and D292. The active-site Nucleophile is the C317. E351 acts as the Proton acceptor in catalysis.

Belongs to the class I-like SAM-binding methyltransferase superfamily. RNA M5U methyltransferase family. TrmA subfamily.

The enzyme catalyses uridine(54) in tRNA + S-adenosyl-L-methionine = 5-methyluridine(54) in tRNA + S-adenosyl-L-homocysteine + H(+). The catalysed reaction is uridine(341) in tmRNA + S-adenosyl-L-methionine = 5-methyluridine(341) in tmRNA + S-adenosyl-L-homocysteine + H(+). Functionally, dual-specificity methyltransferase that catalyzes the formation of 5-methyluridine at position 54 (m5U54) in all tRNAs, and that of position 341 (m5U341) in tmRNA (transfer-mRNA). The chain is tRNA/tmRNA (uracil-C(5))-methyltransferase from Pseudomonas fluorescens (strain Pf0-1).